Here is a 302-residue protein sequence, read N- to C-terminus: Arginase (302 aa).

His103, Asp126, His128, and Asp130 together coordinate Mn(2+). Substrate-binding positions include 128-132, 139-141, and Asp180; these read HGDLN and SGN. Mn(2+)-binding residues include Asp229 and Asp231. Residues Thr243 and Glu274 each contribute to the substrate site.

The protein belongs to the arginase family. It depends on Mn(2+) as a cofactor.

The enzyme catalyses L-arginine + H2O = urea + L-ornithine. It participates in nitrogen metabolism; urea cycle; L-ornithine and urea from L-arginine: step 1/1. This Staphylococcus aureus (strain COL) protein is Arginase (arg).